A 237-amino-acid polypeptide reads, in one-letter code: tRNA (guanine-N(7)-)-methyltransferase (237 aa).

Positions 65, 90, 117, and 140 each coordinate S-adenosyl-L-methionine. Residue Asp140 is part of the active site. Substrate contacts are provided by residues Lys144, Asp176, and 212–215 (TKFE). The tract at residues 197-217 (TCGPRQFSPRGERPETKFERR) is disordered. A compositionally biased stretch (basic and acidic residues) spans 206–217 (RGERPETKFERR).

This sequence belongs to the class I-like SAM-binding methyltransferase superfamily. TrmB family.

The catalysed reaction is guanosine(46) in tRNA + S-adenosyl-L-methionine = N(7)-methylguanosine(46) in tRNA + S-adenosyl-L-homocysteine. Its pathway is tRNA modification; N(7)-methylguanine-tRNA biosynthesis. In terms of biological role, catalyzes the formation of N(7)-methylguanine at position 46 (m7G46) in tRNA. This Alkalilimnicola ehrlichii (strain ATCC BAA-1101 / DSM 17681 / MLHE-1) protein is tRNA (guanine-N(7)-)-methyltransferase.